Reading from the N-terminus, the 345-residue chain is Small ribosomal subunit protein mS45 (345 aa).

A mitochondrion-targeting transit peptide spans 1 to 27 (MSYGLTGTSSKLRGTSSIFSWTQVRHF).

It belongs to the mitochondrion-specific ribosomal protein mS45 family. As to quaternary structure, component of the mitochondrial small ribosomal subunit (mt-SSU). Mature yeast 74S mitochondrial ribosomes consist of a small (37S) and a large (54S) subunit. The 37S small subunit contains a 15S ribosomal RNA (15S mt-rRNA) and 34 different proteins. The 54S large subunit contains a 21S rRNA (21S mt-rRNA) and 46 different proteins.

Its subcellular location is the mitochondrion. In terms of biological role, component of the mitochondrial ribosome (mitoribosome), a dedicated translation machinery responsible for the synthesis of mitochondrial genome-encoded proteins, including at least some of the essential transmembrane subunits of the mitochondrial respiratory chain. The mitoribosomes are attached to the mitochondrial inner membrane and translation products are cotranslationally integrated into the membrane. This chain is Small ribosomal subunit protein mS45 (MRPS35), found in Saccharomyces cerevisiae (strain ATCC 204508 / S288c) (Baker's yeast).